The primary structure comprises 134 residues: NADH-quinone oxidoreductase subunit A (134 aa).

Transmembrane regions (helical) follow at residues 12–32, 64–84, and 93–113; these read FAIY…LAAL, FYLV…LFAW, and WVGF…LLYL.

The protein belongs to the complex I subunit 3 family. As to quaternary structure, NDH-1 is composed of 14 different subunits. Subunits NuoA, H, J, K, L, M, N constitute the membrane sector of the complex.

The protein resides in the cell inner membrane. The catalysed reaction is a quinone + NADH + 5 H(+)(in) = a quinol + NAD(+) + 4 H(+)(out). Functionally, NDH-1 shuttles electrons from NADH, via FMN and iron-sulfur (Fe-S) centers, to quinones in the respiratory chain. The immediate electron acceptor for the enzyme in this species is believed to be ubiquinone. Couples the redox reaction to proton translocation (for every two electrons transferred, four hydrogen ions are translocated across the cytoplasmic membrane), and thus conserves the redox energy in a proton gradient. In Aeromonas salmonicida (strain A449), this protein is NADH-quinone oxidoreductase subunit A.